The sequence spans 82 residues: Cytochrome b559 subunit alpha (82 aa).

A helical transmembrane segment spans residues 22-36 (IIHAVTLPAIFIAGF). Residue H24 coordinates heme.

It belongs to the PsbE/PsbF family. Heterodimer of an alpha subunit and a beta subunit. PSII is composed of 1 copy each of membrane proteins PsbA, PsbB, PsbC, PsbD, PsbE, PsbF, PsbH, PsbI, PsbJ, PsbK, PsbL, PsbM, PsbT, PsbX, PsbY, Psb30/Ycf12, peripheral proteins PsbO, CyanoQ (PsbQ), PsbU, PsbV and a large number of cofactors. It forms dimeric complexes. The cofactor is heme b.

Its subcellular location is the cellular thylakoid membrane. This b-type cytochrome is tightly associated with the reaction center of photosystem II (PSII). PSII is a light-driven water:plastoquinone oxidoreductase that uses light energy to abstract electrons from H(2)O, generating O(2) and a proton gradient subsequently used for ATP formation. It consists of a core antenna complex that captures photons, and an electron transfer chain that converts photonic excitation into a charge separation. The protein is Cytochrome b559 subunit alpha of Prochlorococcus marinus (strain MIT 9515).